An 813-amino-acid polypeptide reads, in one-letter code: Origin of replication complex subunit 1B (813 aa).

The disordered stretch occupies residues 1-109; the sequence is MASTPRAKTF…TPKKKKKIDS (109 aa). Residues 11–21 are compositionally biased toward polar residues; the sequence is KSPTKTPSNIY. Over residues 27-41 the composition is skewed to low complexity; sequence SPSSTSHTPQTPETH. The span at 43–52 shows a compositional bias: basic residues; that stretch reads PLRRSARHVS. The short motif at 83–90 is the Nuclear localization signal element; that stretch reads PRKPTTDV. Positions 163-187 are histone H3 binding; it reads DPEIEDCQICFKSDTNIMIECDDCL. A PHD-type zinc finger spans residues 166-215; the sequence is IEDCQICFKSDTNIMIECDDCLGGFHLKCLKPPLKEVPEGDWICQFCEVK. Cys169, Cys172, Cys183, Cys186, His191, and Cys194 together coordinate Zn(2+). Residues 203-207 form a histone H3 binding region; that stretch reads PEGDW. Zn(2+) contacts are provided by Cys209 and Cys212. In terms of domain architecture, BAH spans 226–344; sequence PKPPEGKKLA…VHWRSFKRLA (119 aa). Residues 319 to 324 form a histone H3 binding region; that stretch reads ASNDGD. The segment at 349-372 is disordered; that stretch reads GDSDSDQEWNGRKEEEVDDSDEEM. The tract at residues 436–803 is necessary and sufficient for ORC complex assembly; that stretch reads PKSLPCRSKE…DDVAFALKDN (368 aa). 471-479 serves as a coordination point for ATP; the sequence is GVPGTGKTI. 2 residues coordinate Mg(2+): Asp561 and Glu562. ATP-binding residues include Glu562, Asn595, and Arg660.

The protein belongs to the ORC1 family. As to quaternary structure, component of the origin recognition complex (ORC) composed of at least ORC1 (ORC1A or ORC1B), ORC2, ORC3, ORC4, ORC5 and ORC6. ORC is regulated in a cell-cycle and development dependent manner. It is sequentially assembled at the exit from anaphase of mitosis and disassembled as cells enter S phase. Interacts directly with ORC2 and ORC5. Binds mostly unmodified histone H3, and, with lower efficiency, H3K4me1 H3K4me2 and H3K4me3. As to expression, follow a cell-cycle regulation with a peak at the G1/S-phase. Mostly expressed in flower buds, and, to a lower exent, in roots, leaves and stems.

The protein localises to the nucleus. Its function is as follows. Essential protein required for ovules fertilization. Component of the origin recognition complex (ORC) that binds origins of replication. It has a role in both chromosomal replication and mating type transcriptional silencing. Binds to the ARS consensus sequence (ACS) of origins of replication. H3K4me3 effector that positively regulates the transcription of a subset of genes. This Arabidopsis thaliana (Mouse-ear cress) protein is Origin of replication complex subunit 1B.